The sequence spans 673 residues: DNA ligase (673 aa).

Residues 36-40 (DSEYD), 85-86 (SL), and glutamate 118 each bind NAD(+). The N6-AMP-lysine intermediate role is filled by lysine 120. Positions 141, 178, 295, and 319 each coordinate NAD(+). Zn(2+) contacts are provided by cysteine 413, cysteine 416, cysteine 431, and cysteine 437. The BRCT domain maps to 596-673 (VRDNPLKGKT…SENEFLALLA (78 aa)).

The protein belongs to the NAD-dependent DNA ligase family. LigA subfamily. Mg(2+) is required as a cofactor. Requires Mn(2+) as cofactor.

It carries out the reaction NAD(+) + (deoxyribonucleotide)n-3'-hydroxyl + 5'-phospho-(deoxyribonucleotide)m = (deoxyribonucleotide)n+m + AMP + beta-nicotinamide D-nucleotide.. Functionally, DNA ligase that catalyzes the formation of phosphodiester linkages between 5'-phosphoryl and 3'-hydroxyl groups in double-stranded DNA using NAD as a coenzyme and as the energy source for the reaction. It is essential for DNA replication and repair of damaged DNA. This chain is DNA ligase, found in Histophilus somni (strain 129Pt) (Haemophilus somnus).